The primary structure comprises 336 residues: MTTVSQNQVVVETEDKQDNLLRLPYFVSVEQLSADDVLHLLQRAQYFKNGGEVPALSRPIFCTNMFFENSTRTHTSFEVAERRLGLTVIPFDPSHSSVNKGENLYDTELTMASLGIELSVIRHPENAYYNEIIRPKEGQHLQMGLVNAGDGSGQHPSQSMLDMMTIYNEFGHFDGLKIMIVGDLTNSRVARSNMEILNTLGAEVYFSGPEYWYNAEEFSKYGTYVKNIDDEIPELDVLMLLRVQHERHNGAEAKTEQLFDAKDYNAAYGLNQRRYDMLKDDAIIMHPGPINRGVEWDGDLVEAPKSRYAVQMHNGVFVRMAMIEAVLRGRKLGGLE.

The carbamoyl phosphate site is built by Arg72 and Thr73. Lys100 contacts L-aspartate. Carbamoyl phosphate is bound by residues Arg122, His155, and Gln158. Positions 188 and 242 each coordinate L-aspartate. Carbamoyl phosphate is bound by residues Gly288 and Pro289.

The protein belongs to the aspartate/ornithine carbamoyltransferase superfamily. ATCase family. As to quaternary structure, heterododecamer (2C3:3R2) of six catalytic PyrB chains organized as two trimers (C3), and six regulatory PyrI chains organized as three dimers (R2).

The enzyme catalyses carbamoyl phosphate + L-aspartate = N-carbamoyl-L-aspartate + phosphate + H(+). It participates in pyrimidine metabolism; UMP biosynthesis via de novo pathway; (S)-dihydroorotate from bicarbonate: step 2/3. Catalyzes the condensation of carbamoyl phosphate and aspartate to form carbamoyl aspartate and inorganic phosphate, the committed step in the de novo pyrimidine nucleotide biosynthesis pathway. This chain is Aspartate carbamoyltransferase catalytic subunit, found in Lactobacillus leichmannii.